We begin with the raw amino-acid sequence, 418 residues long: Methylmalonic aciduria type A protein, mitochondrial (418 aa).

A mitochondrion-targeting transit peptide spans 1–65 (MPMLLPHPHQ…LLSDGLKRKL (65 aa)). GTP is bound by residues 150–158 (GPPGAGKST), Asp-292, and 328–330 (SAR).

Belongs to the SIMIBI class G3E GTPase family. ArgK/MeaB subfamily. In terms of assembly, homodimer. Interacts with MMUT (the apoenzyme form); the interaction is GTP dependent. Widely expressed. Highest expression is observed in liver and skeletal muscle.

It is found in the mitochondrion. It localises to the cytoplasm. The enzyme catalyses GTP + H2O = GDP + phosphate + H(+). GTPase activity is stimulated by MMUT. In terms of biological role, GTPase, binds and hydrolyzes GTP. Involved in intracellular vitamin B12 metabolism, mediates the transport of cobalamin (Cbl) into mitochondria for the final steps of adenosylcobalamin (AdoCbl) synthesis. Functions as a G-protein chaperone that assists AdoCbl cofactor delivery from MMAB to the methylmalonyl-CoA mutase (MMUT). Plays a dual role as both a protectase and a reactivase for MMUT. Protects MMUT from progressive inactivation by oxidation by decreasing the rate of the formation of the oxidized inactive cofactor hydroxocobalamin (OH2Cbl). Additionally acts a reactivase by promoting the replacement of OH2Cbl by the active cofactor AdoCbl, restoring the activity of MMUT in the presence and hydrolysis of GTP. In Homo sapiens (Human), this protein is Methylmalonic aciduria type A protein, mitochondrial.